Here is a 220-residue protein sequence, read N- to C-terminus: Putative phosphatase YhcW (220 aa).

Aspartate 8 (nucleophile) is an active-site residue. A divalent metal cation is bound by residues aspartate 8, aspartate 10, and aspartate 166. Residue aspartate 10 is the Proton donor of the active site.

This sequence belongs to the HAD-like hydrolase superfamily. CbbY/CbbZ/Gph/YieH family. It depends on a divalent metal cation as a cofactor.

This chain is Putative phosphatase YhcW (yhcW), found in Bacillus subtilis (strain 168).